A 217-amino-acid polypeptide reads, in one-letter code: Probable transaldolase (217 aa).

Residue lysine 83 is the Schiff-base intermediate with substrate of the active site.

This sequence belongs to the transaldolase family. Type 3B subfamily.

It is found in the cytoplasm. It catalyses the reaction D-sedoheptulose 7-phosphate + D-glyceraldehyde 3-phosphate = D-erythrose 4-phosphate + beta-D-fructose 6-phosphate. It functions in the pathway carbohydrate degradation; pentose phosphate pathway; D-glyceraldehyde 3-phosphate and beta-D-fructose 6-phosphate from D-ribose 5-phosphate and D-xylulose 5-phosphate (non-oxidative stage): step 2/3. In terms of biological role, transaldolase is important for the balance of metabolites in the pentose-phosphate pathway. The polypeptide is Probable transaldolase (Ruegeria sp. (strain TM1040) (Silicibacter sp.)).